The chain runs to 92 residues: Bombyxin A-6 (92 aa).

The first 19 residues, 1 to 19 (MKILLAIALMLSTVMWVST), serve as a signal peptide directing secretion. Gln20 carries the post-translational modification Pyrrolidone carboxylic acid. Disulfide bonds link Cys29-Cys79, Cys41-Cys92, and Cys78-Cys83. Positions 50–70 (SGAQFASYGSAWLMPYSEGRG) are cleaved as a propeptide — c peptide like.

It belongs to the insulin family. Heterodimer of a B chain and an A chain linked by two disulfide bonds.

The protein resides in the secreted. Functionally, brain peptide responsible for activation of prothoracic glands to produce ecdysone in insects. The protein is Bombyxin A-6 (BBXA6) of Bombyx mori (Silk moth).